The primary structure comprises 200 residues: Rho-related protein racD (200 aa).

Ala-20, Gly-22, Lys-23, Thr-24, Cys-25, Tyr-39, and Thr-42 together coordinate GTP. Thr-24 provides a ligand contact to Mg(2+). 2 consecutive short sequence motifs (switch) follow at residues 33 to 44 and 64 to 82; these read NEFPKDYVPTVF and DTAGQEDYEQLRPLSYPNT. Thr-42 serves as a coordination point for Mg(2+). The GTP site is built by Lys-123, Asp-125, and Ala-166. Position 197 is a cysteine methyl ester (Cys-197). The S-geranylgeranyl cysteine moiety is linked to residue Cys-197. A propeptide spans 198-200 (removed in mature form); it reads ALL.

Belongs to the small GTPase superfamily. Rho family. Requires Mg(2+) as cofactor.

It is found in the cell membrane. Its subcellular location is the cytoplasm. The protein localises to the cytoskeleton. The catalysed reaction is GTP + H2O = GDP + phosphate + H(+). Its activity is regulated as follows. Regulated by guanine nucleotide exchange factors (GEFs) which promote the exchange of bound GDP for free GTP, GTPase activating proteins (GAPs) which increase the GTP hydrolysis activity, and GDP dissociation inhibitors which inhibit the dissociation of the nucleotide from the GTPase. In terms of biological role, small GTPase which cycles between active GTP-bound and inactive GDP-bound states. The polypeptide is Rho-related protein racD (Entamoeba histolytica (strain ATCC 30459 / HM-1:IMSS / ABRM)).